A 142-amino-acid chain; its full sequence is Large ribosomal subunit protein uL11 (142 aa).

This sequence belongs to the universal ribosomal protein uL11 family. Part of the ribosomal stalk of the 50S ribosomal subunit. Interacts with L10 and the large rRNA to form the base of the stalk. L10 forms an elongated spine to which L12 dimers bind in a sequential fashion forming a multimeric L10(L12)X complex. Post-translationally, one or more lysine residues are methylated.

Its function is as follows. Forms part of the ribosomal stalk which helps the ribosome interact with GTP-bound translation factors. The protein is Large ribosomal subunit protein uL11 of Acidithiobacillus ferrooxidans (strain ATCC 23270 / DSM 14882 / CIP 104768 / NCIMB 8455) (Ferrobacillus ferrooxidans (strain ATCC 23270)).